Reading from the N-terminus, the 686-residue chain is Tripartite terminase subunit 3 (686 aa).

The Walker A motif motif lies at Ile219–Thr226. The Walker B motif signature appears at Leu314 to Glu319. The active-site For ATPase activity is Glu319. Residues Asp475, Glu548, and Asp660 each act as for nuclease activity in the active site.

This sequence belongs to the herpesviridae TRM3 protein family. Interacts with the terminase subunits TRM1 and TRM2. Interacts with portal protein.

It is found in the host nucleus. Its function is as follows. Component of the molecular motor that translocates viral genomic DNA in empty capsid during DNA packaging. Forms a tripartite terminase complex together with TRM1 and TRM2 in the host cytoplasm. Once the complex reaches the host nucleus, it interacts with the capsid portal vertex. This portal forms a ring in which genomic DNA is translocated into the capsid. TRM3 carries an RNase H-like nuclease activity that plays an important role for the cleavage of concatemeric viral DNA into unit length genomes. The sequence is that of Tripartite terminase subunit 3 from Equine herpesvirus 2 (strain 86/87) (EHV-2).